The sequence spans 249 residues: AA9 family lytic polysaccharide monooxygenase cel61B (249 aa).

An N-terminal signal peptide occupies residues 1 to 19; it reads MKSCAILAALGCLAGSVLG. Residue histidine 20 coordinates Cu(2+). An N-linked (GlcNAc...) asparagine glycan is attached at asparagine 25. 2 cysteine pairs are disulfide-bonded: cysteine 78/cysteine 198 and cysteine 120/cysteine 124. Histidine 108 is a binding site for Cu(2+). O2-binding residues include histidine 184 and glutamine 193. Residue tyrosine 195 participates in Cu(2+) binding.

It belongs to the polysaccharide monooxygenase AA9 family. In terms of assembly, monomer. Cu(2+) is required as a cofactor.

It localises to the secreted. It catalyses the reaction [(1-&gt;4)-beta-D-glucosyl]n+m + reduced acceptor + O2 = 4-dehydro-beta-D-glucosyl-[(1-&gt;4)-beta-D-glucosyl]n-1 + [(1-&gt;4)-beta-D-glucosyl]m + acceptor + H2O.. Lytic polysaccharide monooxygenase (LPMO) that depolymerizes crystalline and amorphous polysaccharides via the oxidation of scissile alpha- or beta-(1-4)-glycosidic bonds, yielding C1 or C4 oxidation products. Catalysis by LPMOs requires the reduction of the active-site copper from Cu(II) to Cu(I) by a reducing agent and H(2)O(2) or O(2) as a cosubstrate. The protein is AA9 family lytic polysaccharide monooxygenase cel61B of Hypocrea jecorina (strain QM6a) (Trichoderma reesei).